The sequence spans 815 residues: MNEYNNDNMEQEKEKKKEEQKYKNIIKKEYFIFPRLYDKNKEIEYNKLRIHNIKEYICIHLTISLFIILIECFVFSFNLNIKDTTYVEICVVIFSILNCLMHIVVLIKMYFFTSESVYTKGVFIGYIVLNQVFQFLSLYFFTKRNEQSKNDIAHLKYYDNSFNLYVHFFVDSVFILCLPALSFFLSVLFMMMFLCLNILLINMIKFNKTNYGSDIYHICLLSVVLLMFLILRYMMEERNRLLFFFIKDMMFDNYKKWYSDYIGAHYDKDKDSTTINGDNNKYEKEKCEDYKFLFSNKCILFHDFTLNACYKDYYSMICFLNKLLKSCNIKEDMSSNTSVNINGDTYQNMNFHDNINSNIPKNYNSFYEELKKNLNESDILTIAYEVEVLKNIKKINCDEIGKNWDYSFIDSEYGKSTLVILEVGYHLISPYIENNENKKKKLQLFLLLINSMYFPNPYHNANHGATVCHLSKCLAHITDYDSYLNNTYMICYLIASIAHDVGHPGKTNSYLSETNHILSIRYNDMSILENYHCSITFSILQLIGFDFLINNEDTKLVEKNNYTNMRKFIIELIISTDMKLHFEYVDIFKKRKKSQNFDISDTDAINLGTINIKLADIGHTCLKWKDHAKWTMLVSEEFFSQKRVEELHKNKNIDPLNFSNFGKEDNIDEGMIFNYENIYINYINNINNINTYDYSYIKLNFIHHHDFVKSIPSTQVYFFEIIVMPLIKELQSMEKSKKEITQKVLHNLNINLQTWRLIEKNINLFYNTEKMTGTDYYKNLEKQKLLRGIRLLDIAEEDVISLTKNFKEEIKHGKL.

Topologically, residues 1–56 (MNEYNNDNMEQEKEKKKEEQKYKNIIKKEYFIFPRLYDKNKEIEYNKLRIHNIKEY) are cytoplasmic. The helical transmembrane segment at 57 to 77 (ICIHLTISLFIILIECFVFSF) threads the bilayer. Residues 78–86 (NLNIKDTTY) are Extracellular-facing. The helical transmembrane segment at 87-107 (VEICVVIFSILNCLMHIVVLI) threads the bilayer. The Cytoplasmic portion of the chain corresponds to 108–120 (KMYFFTSESVYTK). Residues 121–141 (GVFIGYIVLNQVFQFLSLYFF) traverse the membrane as a helical segment. The Extracellular portion of the chain corresponds to 142 to 160 (TKRNEQSKNDIAHLKYYDN). Residues 161 to 181 (SFNLYVHFFVDSVFILCLPAL) traverse the membrane as a helical segment. At 182 to 183 (SF) the chain is on the cytoplasmic side. Residues 184 to 204 (FLSVLFMMMFLCLNILLINMI) traverse the membrane as a helical segment. Over 205 to 210 (KFNKTN) the chain is Extracellular. Asn-207 carries an N-linked (GlcNAc...) asparagine glycan. Residues 211 to 231 (YGSDIYHICLLSVVLLMFLIL) form a helical membrane-spanning segment. Residues 232–815 (RYMMEERNRL…FKEEIKHGKL (584 aa)) lie on the Cytoplasmic side of the membrane. One can recognise a PDEase domain in the interval 384–762 (YEVEVLKNIK…QTWRLIEKNI (379 aa)). His-459 (proton donor) is an active-site residue. Position 459-463 (459-463 (HNANH)) interacts with 3',5'-cyclic GMP. A divalent metal cation is bound by residues His-463, His-499, Asp-500, and Asp-616. 3',5'-cyclic GMP-binding residues include Asp-500, Asp-616, and Gln-715.

Belongs to the cyclic nucleotide phosphodiesterase family. The cofactor is a divalent metal cation.

Its subcellular location is the membrane. It catalyses the reaction 3',5'-cyclic GMP + H2O = GMP + H(+). It functions in the pathway purine metabolism; 3',5'-cyclic GMP degradation; GMP from 3',5'-cyclic GMP: step 1/1. Its function is as follows. Specifically hydrolyzes the second messenger cGMP, which is a key regulator of many important physiological processes. Probably by regulating cGMP levels, required for activation of gametogenesis. This Plasmodium falciparum (isolate 3D7) protein is cGMP-specific 3',5'-cyclic phosphodiesterase delta.